Reading from the N-terminus, the 86-residue chain is Small ribosomal subunit protein bS20 (86 aa).

It belongs to the bacterial ribosomal protein bS20 family.

Functionally, binds directly to 16S ribosomal RNA. The sequence is that of Small ribosomal subunit protein bS20 from Mycolicibacterium gilvum (strain PYR-GCK) (Mycobacterium gilvum (strain PYR-GCK)).